Reading from the N-terminus, the 279-residue chain is Bifunctional protein FolD (279 aa).

Residues 159 to 161 (GRS), serine 184, and threonine 225 contribute to the NADP(+) site.

The protein belongs to the tetrahydrofolate dehydrogenase/cyclohydrolase family. In terms of assembly, homodimer.

The catalysed reaction is (6R)-5,10-methylene-5,6,7,8-tetrahydrofolate + NADP(+) = (6R)-5,10-methenyltetrahydrofolate + NADPH. It catalyses the reaction (6R)-5,10-methenyltetrahydrofolate + H2O = (6R)-10-formyltetrahydrofolate + H(+). It functions in the pathway one-carbon metabolism; tetrahydrofolate interconversion. Its function is as follows. Catalyzes the oxidation of 5,10-methylenetetrahydrofolate to 5,10-methenyltetrahydrofolate and then the hydrolysis of 5,10-methenyltetrahydrofolate to 10-formyltetrahydrofolate. The sequence is that of Bifunctional protein FolD from Methanospirillum hungatei JF-1 (strain ATCC 27890 / DSM 864 / NBRC 100397 / JF-1).